A 202-amino-acid chain; its full sequence is CASP-like protein 2B1 (202 aa).

Residues 1-29 (MSYLGVGVSPGNVPVYHGSNLKVIDKRVR) are Cytoplasmic-facing. A helical membrane pass occupies residues 30 to 50 (LAELVLRCLICGLGVLAAVLV). Over 51-72 (GTDTQVKEIFSIQKKARFTDMK) the chain is Extracellular. The chain crosses the membrane as a helical span at residues 73 to 93 (ALVFLVIANGIAAAYSLLQGV). The Cytoplasmic portion of the chain corresponds to 94–109 (RCVVGMVRGSALFSKP). A helical transmembrane segment spans residues 110–130 (LAWAIFSGDQMMAYLTVAAVA). Residues 131-164 (AAAQSAVFAKLGQPELQWMKICNMYGKFCNQVGE) are Extracellular-facing. A helical transmembrane segment spans residues 165–185 (GIASALLVSVSMVVLSCISAF). Over 186–202 (SLFRLYGANKGKDCTRW) the chain is Cytoplasmic.

The protein belongs to the Casparian strip membrane proteins (CASP) family. In terms of assembly, homodimer and heterodimers.

The protein resides in the cell membrane. The polypeptide is CASP-like protein 2B1 (Ricinus communis (Castor bean)).